Consider the following 401-residue polypeptide: Probable tRNA sulfurtransferase (401 aa).

In terms of domain architecture, THUMP spans Glu-60–Asp-165. Residues Met-183 to Ile-184, His-208 to Phe-209, Arg-265, Gly-287, and Gln-296 contribute to the ATP site.

It belongs to the ThiI family.

The protein resides in the cytoplasm. The catalysed reaction is [ThiI sulfur-carrier protein]-S-sulfanyl-L-cysteine + a uridine in tRNA + 2 reduced [2Fe-2S]-[ferredoxin] + ATP + H(+) = [ThiI sulfur-carrier protein]-L-cysteine + a 4-thiouridine in tRNA + 2 oxidized [2Fe-2S]-[ferredoxin] + AMP + diphosphate. The enzyme catalyses [ThiS sulfur-carrier protein]-C-terminal Gly-Gly-AMP + S-sulfanyl-L-cysteinyl-[cysteine desulfurase] + AH2 = [ThiS sulfur-carrier protein]-C-terminal-Gly-aminoethanethioate + L-cysteinyl-[cysteine desulfurase] + A + AMP + 2 H(+). It functions in the pathway cofactor biosynthesis; thiamine diphosphate biosynthesis. Catalyzes the ATP-dependent transfer of a sulfur to tRNA to produce 4-thiouridine in position 8 of tRNAs, which functions as a near-UV photosensor. Also catalyzes the transfer of sulfur to the sulfur carrier protein ThiS, forming ThiS-thiocarboxylate. This is a step in the synthesis of thiazole, in the thiamine biosynthesis pathway. The sulfur is donated as persulfide by IscS. In Bacillus licheniformis (strain ATCC 14580 / DSM 13 / JCM 2505 / CCUG 7422 / NBRC 12200 / NCIMB 9375 / NCTC 10341 / NRRL NRS-1264 / Gibson 46), this protein is Probable tRNA sulfurtransferase.